A 98-amino-acid polypeptide reads, in one-letter code: NADH-ubiquinone oxidoreductase chain 4L (98 aa).

2 helical membrane passes run 1–21 (MTLI…GLAL) and 48–68 (PLHL…PFAA).

This sequence belongs to the complex I subunit 4L family. Core subunit of respiratory chain NADH dehydrogenase (Complex I) which is composed of 45 different subunits.

It localises to the mitochondrion inner membrane. It catalyses the reaction a ubiquinone + NADH + 5 H(+)(in) = a ubiquinol + NAD(+) + 4 H(+)(out). In terms of biological role, core subunit of the mitochondrial membrane respiratory chain NADH dehydrogenase (Complex I) which catalyzes electron transfer from NADH through the respiratory chain, using ubiquinone as an electron acceptor. Part of the enzyme membrane arm which is embedded in the lipid bilayer and involved in proton translocation. The protein is NADH-ubiquinone oxidoreductase chain 4L (mt-nd4l) of Xenopus laevis (African clawed frog).